The primary structure comprises 223 residues: Prolactin-3D4 (223 aa).

Residues 1–28 (MQLTLTLSGSSMQLLLLVSNLLLWENMA) form the signal peptide. 2 disulfide bridges follow: Cys-80-Cys-198 and Cys-215-Cys-223. Asn-108 and Asn-157 each carry an N-linked (GlcNAc...) asparagine glycan.

This sequence belongs to the somatotropin/prolactin family. Post-translationally, N-glycosylated.

It is found in the secreted. The chain is Prolactin-3D4 (Prl3d4) from Rattus norvegicus (Rat).